We begin with the raw amino-acid sequence, 194 residues long: Small ribosomal subunit protein uS4c (194 aa).

The S4 RNA-binding domain occupies 82–143; sequence MRLDNILFRL…KERSKVLIQN (62 aa).

Belongs to the universal ribosomal protein uS4 family. As to quaternary structure, part of the 30S ribosomal subunit. Contacts protein S5. The interaction surface between S4 and S5 is involved in control of translational fidelity.

The protein resides in the plastid. Its subcellular location is the chloroplast. In terms of biological role, one of the primary rRNA binding proteins, it binds directly to 16S rRNA where it nucleates assembly of the body of the 30S subunit. Functionally, with S5 and S12 plays an important role in translational accuracy. In Cypella sp. (strain Porto Alegre 027), this protein is Small ribosomal subunit protein uS4c (rps4).